A 164-amino-acid polypeptide reads, in one-letter code: Phosphopantetheine adenylyltransferase (164 aa).

Position 9 (Thr-9) interacts with substrate. Residues Thr-9 to Phe-10 and His-17 contribute to the ATP site. Substrate-binding residues include Lys-41, Leu-78, and Arg-92. Residues Gly-93–Arg-95, Glu-103, and Arg-128–Lys-134 contribute to the ATP site.

This sequence belongs to the bacterial CoaD family. In terms of assembly, homohexamer. It depends on Mg(2+) as a cofactor.

It localises to the cytoplasm. The enzyme catalyses (R)-4'-phosphopantetheine + ATP + H(+) = 3'-dephospho-CoA + diphosphate. It functions in the pathway cofactor biosynthesis; coenzyme A biosynthesis; CoA from (R)-pantothenate: step 4/5. Reversibly transfers an adenylyl group from ATP to 4'-phosphopantetheine, yielding dephospho-CoA (dPCoA) and pyrophosphate. This chain is Phosphopantetheine adenylyltransferase, found in Paracoccus denitrificans (strain Pd 1222).